The chain runs to 263 residues: Polyglutamine-binding protein 1 (263 aa).

One can recognise a WW domain in the interval 46–80 (EGLPPSWYKVFDPSCGLPYYWNVETDLVSWLSPHD). The interval 94 to 263 (NSNADAEDKS…AEASRSKQQD (170 aa)) is disordered. The segment covering 99 to 173 (AEDKSERNLE…DKADREDGKD (75 aa)) has biased composition (basic and acidic residues). Residues 104 to 110 (ERNLEKV) form a 1-1; approximate repeat. A 5 X 7 AA approximate tandem repeats of D-R-[NS]-H-E-K-S region spans residues 104 to 138 (ERNLEKVDRNHEKSDRSHEKPDRSHEKADRNHEKS). A 1-2 repeat occupies 111–117 (DRNHEKS). Residues 118-124 (DRSHEKP) form a 1-3; approximate repeat. Residues 125–131 (DRSHEKA) form a 1-4; approximate repeat. A run of 10 repeats spans residues 132-138 (DRNHEKS), 139-140 (DR), 141-142 (ER), 143-144 (ER), 150-151 (DR), 152-153 (ER), 154-155 (DR), 156-157 (DR), 158-159 (ER), and 160-161 (ER). Residues 139-144 (DRERER) are 3 X 2 AA tandem repeats of [DE]-R. Residues 150 to 161 (DRERDRDRERER) form a 6 X 2 AA tandem repeats of [DE]-R region. The interval 243–253 (YPSPGAVLRAN) is important for interaction with TXNL4A. Ser-245 is subject to Phosphoserine.

As to quaternary structure, interacts with POU3F2/Brn-2, ATXN1, TXNL4A, HTT and AR. Interaction with ATXN1 correlates positively with the length of the polyglutamine tract. Interacts with RNA polymerase II large subunit in a phosphorylation-dependent manner. Forms a ternary complex with ATXN1 mutant and phosphorylated RNA polymerase II. Interacts (via C-terminus) with TXNL4A and CD2BP2. Interacts (via WW domain) with ATN1 and SF3B1, and may interact with additional splice factors. Interacts (via WW domain) with WBP11; Leading to reduce interaction between PQBP1 and TXNL4A. Interacts with CAPRIN1. Interacts with DDX1. Interacts with SFPQ. Interacts with KHSRP.

Its subcellular location is the nucleus. It is found in the nucleus speckle. The protein resides in the cytoplasmic granule. Intrinsically disordered protein that acts as a scaffold, and which is involved in different processes, such as pre-mRNA splicing, transcription regulation, innate immunity and neuron development. Interacts with splicing-related factors via the intrinsically disordered region and regulates alternative splicing of target pre-mRNA species. May suppress the ability of POU3F2 to transactivate the DRD1 gene in a POU3F2 dependent manner. Can activate transcription directly or via association with the transcription machinery. May be involved in ATXN1 mutant-induced cell death. The interaction with ATXN1 mutant reduces levels of phosphorylated RNA polymerase II large subunit. Involved in the assembly of cytoplasmic stress granule, possibly by participating in the transport of neuronal RNA granules. Also acts as an innate immune sensor of infection by retroviruses, by detecting the presence of reverse-transcribed DNA in the cytosol. Directly binds retroviral reverse-transcribed DNA in the cytosol and interacts with CGAS, leading to activate the cGAS-STING signaling pathway, triggering type-I interferon production. The protein is Polyglutamine-binding protein 1 (Pqbp1) of Rattus norvegicus (Rat).